The primary structure comprises 137 residues: MAKELNPTENIEKLTDIQRHVTQLRGTEAPFSGKLLHNKREGVYQCLCCHQPLFISESKFDSGCGWPSFYQPLDAESIRYIDDYSHNMHRVEIRCGHCDAHLGHVFSDGPQPTGERYCVNSASLNFVDDQNGEQIPG.

The 123-residue stretch at 7–129 folds into the MsrB domain; it reads PTENIEKLTD…NSASLNFVDD (123 aa). Residues C46, C49, C95, and C98 each coordinate Zn(2+). Residue C118 is the Nucleophile of the active site.

The protein belongs to the MsrB Met sulfoxide reductase family. The cofactor is Zn(2+).

The catalysed reaction is L-methionyl-[protein] + [thioredoxin]-disulfide + H2O = L-methionyl-(R)-S-oxide-[protein] + [thioredoxin]-dithiol. This chain is Peptide methionine sulfoxide reductase MsrB, found in Yersinia enterocolitica serotype O:8 / biotype 1B (strain NCTC 13174 / 8081).